A 130-amino-acid chain; its full sequence is Small ribosomal subunit protein uS9 (130 aa).

This sequence belongs to the universal ribosomal protein uS9 family.

In Agathobacter rectalis (strain ATCC 33656 / DSM 3377 / JCM 17463 / KCTC 5835 / VPI 0990) (Eubacterium rectale), this protein is Small ribosomal subunit protein uS9.